The sequence spans 135 residues: UPF0329 protein ECU07_1860/ECU10_0040/ECU11_2100 (135 aa).

It belongs to the UPF0329 family.

This is UPF0329 protein ECU07_1860/ECU10_0040/ECU11_2100 from Encephalitozoon cuniculi (strain GB-M1) (Microsporidian parasite).